A 279-amino-acid polypeptide reads, in one-letter code: MLSPANGEQIHLVNYVEDYLDSIESLPFDLQRNVSLMREIDAKYQEILKELDDYYEKFKRETDGTQKRRVLHCIQRALIRSQELGDEKIQIVSQMVELVENRSRQVDSHVELFEAHQDISDGTGGSGKAGQDKSKSEAITQADKPNNKRSRRQRNNENRENASNNHDHDDITSGTPKEKKAKTSKKKKRSKAKAEREASPADLPIDPNEPTYCLCNQVSYGEMIGCDNDECPIEWFHFSCVGLNHKPKGKWYCPKCRGESEKTMDKALEKSKKERAYNR.

Positions A115–D206 are disordered. K135 participates in a covalent cross-link: Glycyl lysine isopeptide (Lys-Gly) (interchain with G-Cter in SUMO2). Basic and acidic residues predominate over residues R154–I171. A compositionally biased stretch (basic residues) spans K179–K191. A PHD-type zinc finger spans residues P210–E259. The Zn(2+) site is built by C213, C215, C226, C231, H237, C240, C253, and C256. A PBR region spans residues K262–R279.

Belongs to the ING family. As to quaternary structure, interacts with H3K4me3 and to a lesser extent with H3K4me2. Isoform 2 interacts with RSL1D1. As to expression, in the adult, widely expressed with highest levels in thymus and testis.

It localises to the nucleus. Its function is as follows. Isoform 1 inhibits p53-dependent transcriptional activation and may function as an oncoprotein. Isoform 2 acts as a negative growth regulator by cooperating with p53 in transcriptional activation of p53-responsive genes and may act as a tumor suppressor. This chain is Inhibitor of growth protein 1 (Ing1), found in Mus musculus (Mouse).